An 86-amino-acid chain; its full sequence is Toxin 3FTx-Dis4 (86 aa).

The first 19 residues, 1–19 (MKTLLLSLVMVGFMYLVSG), serve as a signal peptide directing secretion. 3 disulfide bridges follow: Cys-24/Cys-45, Cys-38/Cys-63, and Cys-79/Cys-84.

Belongs to the three-finger toxin family. Ancestral subfamily. Expressed by the venom gland.

The protein resides in the secreted. The sequence is that of Toxin 3FTx-Dis4 from Dispholidus typus (Boomslang).